Consider the following 207-residue polypeptide: Ribosomal RNA small subunit methyltransferase G (207 aa).

S-adenosyl-L-methionine-binding positions include glycine 73, leucine 78, 124 to 125, and arginine 139; that span reads VE.

It belongs to the methyltransferase superfamily. RNA methyltransferase RsmG family.

Its subcellular location is the cytoplasm. It carries out the reaction guanosine(527) in 16S rRNA + S-adenosyl-L-methionine = N(7)-methylguanosine(527) in 16S rRNA + S-adenosyl-L-homocysteine. Specifically methylates the N7 position of guanine in position 527 of 16S rRNA. The chain is Ribosomal RNA small subunit methyltransferase G from Shigella dysenteriae serotype 1 (strain Sd197).